The chain runs to 271 residues: Glutamate racemase (271 aa).

Substrate-binding positions include 10–11 (DS) and 42–43 (YG). Cys73 serves as the catalytic Proton donor/acceptor. 74–75 (NT) is a substrate binding site. The active-site Proton donor/acceptor is Cys183. Substrate is bound at residue 184–185 (TH).

The protein belongs to the aspartate/glutamate racemases family.

The enzyme catalyses L-glutamate = D-glutamate. The protein operates within cell wall biogenesis; peptidoglycan biosynthesis. In terms of biological role, provides the (R)-glutamate required for cell wall biosynthesis. The chain is Glutamate racemase from Streptococcus thermophilus (strain ATCC BAA-250 / LMG 18311).